A 202-amino-acid chain; its full sequence is FMN-dependent NADH:quinone oxidoreductase (202 aa).

FMN contacts are provided by residues Ser10, 16–18, and 96–99; these read SAS and MWNF.

It belongs to the azoreductase type 1 family. As to quaternary structure, homodimer. The cofactor is FMN.

The enzyme catalyses 2 a quinone + NADH + H(+) = 2 a 1,4-benzosemiquinone + NAD(+). It catalyses the reaction N,N-dimethyl-1,4-phenylenediamine + anthranilate + 2 NAD(+) = 2-(4-dimethylaminophenyl)diazenylbenzoate + 2 NADH + 2 H(+). Its function is as follows. Quinone reductase that provides resistance to thiol-specific stress caused by electrophilic quinones. In terms of biological role, also exhibits azoreductase activity. Catalyzes the reductive cleavage of the azo bond in aromatic azo compounds to the corresponding amines. This Beijerinckia indica subsp. indica (strain ATCC 9039 / DSM 1715 / NCIMB 8712) protein is FMN-dependent NADH:quinone oxidoreductase.